The primary structure comprises 430 residues: Aspartate aminotransferase, mitochondrial (430 aa).

A mitochondrion-targeting transit peptide spans 1-29; sequence MALLHSGRVLSGMAAAFHPGLAAAASARA. Thr-48 bears the Phosphothreonine mark. Lys-59 is modified (N6-acetyllysine). Gly-65 is a binding site for substrate. At Lys-73 the chain carries N6-acetyllysine; alternate. At Lys-73 the chain carries N6-succinyllysine; alternate. Lys-82 bears the N6-acetyllysine mark. Residue Lys-90 is modified to N6-acetyllysine; alternate. The residue at position 90 (Lys-90) is an N6-succinyllysine; alternate. Residue Tyr-96 is modified to 3'-nitrotyrosine; alternate. Tyr-96 bears the Phosphotyrosine; alternate mark. An N6-acetyllysine; alternate mark is found at Lys-107 and Lys-122. N6-succinyllysine; alternate is present on residues Lys-107 and Lys-122. The residue at position 143 (Ser-143) is a Phosphoserine. The residue at position 159 (Lys-159) is an N6-acetyllysine; alternate. Lys-159 carries the post-translational modification N6-succinyllysine; alternate. A substrate-binding site is contributed by Trp-162. Lys-185 carries the post-translational modification N6-acetyllysine; alternate. Position 185 is an N6-succinyllysine; alternate (Lys-185). Asn-215 contributes to the substrate binding site. Residue Lys-227 is modified to N6-succinyllysine. Residue Lys-234 is modified to N6-acetyllysine. N6-acetyllysine; alternate is present on residues Lys-279 and Lys-296. Lys-279 is modified (N6-(pyridoxal phosphate)lysine; alternate). Residue Lys-296 is modified to N6-succinyllysine; alternate. Lys-302 carries the post-translational modification N6-acetyllysine. At Lys-309 the chain carries N6-acetyllysine; alternate. Lys-309 carries the N6-succinyllysine; alternate modification. Arg-313 is subject to Asymmetric dimethylarginine. N6-acetyllysine; alternate is present on Lys-338. Lys-338 is modified (N6-succinyllysine; alternate). The residue at position 345 (Lys-345) is an N6-acetyllysine. Residue Lys-363 is modified to N6-acetyllysine; alternate. Lys-363 is subject to N6-succinyllysine; alternate. Lys-364 and Lys-387 each carry N6-acetyllysine. Lys-396 and Lys-404 each carry N6-acetyllysine; alternate. An N6-succinyllysine; alternate mark is found at Lys-396 and Lys-404. Position 407 (Arg-407) interacts with substrate.

The protein belongs to the class-I pyridoxal-phosphate-dependent aminotransferase family. In terms of assembly, homodimer. Pyridoxal 5'-phosphate serves as cofactor. As to expression, expressed in all tissues tested: liver, pancreas, kidney, heart, spleen, arterioles, and lymphocytes.

The protein resides in the mitochondrion matrix. Its subcellular location is the cell membrane. The catalysed reaction is L-aspartate + 2-oxoglutarate = oxaloacetate + L-glutamate. It catalyses the reaction L-kynurenine + 2-oxoglutarate = kynurenate + L-glutamate + H2O. In terms of biological role, catalyzes the irreversible transamination of the L-tryptophan metabolite L-kynurenine to form kynurenic acid (KA). As a member of the malate-aspartate shuttle, it has a key role in the intracellular NAD(H) redox balance. Is important for metabolite exchange between mitochondria and cytosol, and for amino acid metabolism. Facilitates cellular uptake of long-chain free fatty acids. The sequence is that of Aspartate aminotransferase, mitochondrial (Got2) from Rattus norvegicus (Rat).